Here is a 273-residue protein sequence, read N- to C-terminus: Chaperone protein PsaB (273 aa).

The N-terminal stretch at 1–31 is a signal peptide; sequence MKNLFFSAYKKVFSYITSIVIFMVSLPYAYS. Cysteines 128 and 163 form a disulfide.

The protein belongs to the periplasmic pilus chaperone family.

It is found in the periplasm. Required for the biogenesis of the pH 6 antigen. The protein is Chaperone protein PsaB (psaB) of Yersinia pestis.